A 150-amino-acid chain; its full sequence is Large ribosomal subunit protein bL9 (150 aa).

Belongs to the bacterial ribosomal protein bL9 family.

Functionally, binds to the 23S rRNA. In Pseudarthrobacter chlorophenolicus (strain ATCC 700700 / DSM 12829 / CIP 107037 / JCM 12360 / KCTC 9906 / NCIMB 13794 / A6) (Arthrobacter chlorophenolicus), this protein is Large ribosomal subunit protein bL9.